A 137-amino-acid chain; its full sequence is Probable 4-amino-4-deoxy-L-arabinose-phosphoundecaprenol flippase subunit ArnF (137 aa).

Residues 1–3 (MNA) lie on the Cytoplasmic side of the membrane. The helical transmembrane segment at 4 to 24 (LRGWLAALGSVLLASAAQLGM) threads the bilayer. Over 25–44 (RWGMSRLPLPEAWAGQTPER) the chain is Periplasmic. The helical transmembrane segment at 45–65 (AALLAVALAVAAYAASLLCWL) threads the bilayer. Residues 66 to 76 (AALRHLPLGRA) lie on the Cytoplasmic side of the membrane. Residues 77–97 (YSLLSASYALVYLLAASLPAF) form a helical membrane-spanning segment. Topologically, residues 98-100 (DET) are periplasmic. A helical membrane pass occupies residues 101–121 (FSTSKTLGVGLVVLGVLTVNA). Topologically, residues 122–137 (RRTAAAPAHHPSRKAP) are cytoplasmic.

The protein belongs to the ArnF family. In terms of assembly, heterodimer of ArnE and ArnF.

It localises to the cell inner membrane. It participates in bacterial outer membrane biogenesis; lipopolysaccharide biosynthesis. Its function is as follows. Translocates 4-amino-4-deoxy-L-arabinose-phosphoundecaprenol (alpha-L-Ara4N-phosphoundecaprenol) from the cytoplasmic to the periplasmic side of the inner membrane. The polypeptide is Probable 4-amino-4-deoxy-L-arabinose-phosphoundecaprenol flippase subunit ArnF (Pseudomonas aeruginosa (strain ATCC 15692 / DSM 22644 / CIP 104116 / JCM 14847 / LMG 12228 / 1C / PRS 101 / PAO1)).